We begin with the raw amino-acid sequence, 897 residues long: 3'-5' exonuclease DinG (897 aa).

An Exonuclease domain is found at 8-161; sequence VVDLETTGNQ…DEDAATTAKL (154 aa). Residues 241-496 enclose the Helicase ATP-binding domain; the sequence is SKAVDQLGLT…KAIDQLEKQR (256 aa). An ATP-binding site is contributed by 276 to 283; it reads ASLGSGKS. Positions 448–451 match the DEAH box motif; that stretch reads DEAH. The Helicase C-terminal domain maps to 703-893; it reads NIDEYVASIV…QFGKLLRQIQ (191 aa).

This sequence belongs to the helicase family. DinG subfamily. Type 2 sub-subfamily.

Its function is as follows. 3'-5' exonuclease. The protein is 3'-5' exonuclease DinG of Staphylococcus aureus (strain MSSA476).